The chain runs to 423 residues: MDKIIVKGGNTRLSGEVVIEGAKNAVLPLLAATILASEGQTTLTNVPILSDVYTMNNVVRGLDIAVDFDEENNTVVVDASGEILDQAPYEYVSKMRASIVVLGPILARNGHAKVSMPGGCTIGSRPIDLHLKGLEAMGAKITQVGGDITATAEKLKGATIYMDFPSVGATQNLMMAATLADGVTTIENAAREPEIVDLAILLNEMGANVKGAGTEKLVIKGVKSLHGTQHAVIQDRIEAGTFMVAAAMTSGNVLIKDAIWEHNRPLISKLLEMGVDVKEEDRGIRVKSDVSKLKPVAVKTLPHPGFPTDMQAQFTALMAVVKGKSSISETVFENRFQHLEEMRRMGLHSEILRDTAMIHGGLPLQGARVMSTDLRASAALILTGMVAEGTTTVGKLTHLDRGYYKFHEKLAKLGAQISRVSEA.

23–24 (KN) is a phosphoenolpyruvate binding site. A UDP-N-acetyl-alpha-D-glucosamine-binding site is contributed by Arg96. The active-site Proton donor is Cys120. Cys120 carries the post-translational modification 2-(S-cysteinyl)pyruvic acid O-phosphothioketal. Residues 125 to 129 (RPIDL), Asp309, and Val331 contribute to the UDP-N-acetyl-alpha-D-glucosamine site.

This sequence belongs to the EPSP synthase family. MurA subfamily.

It localises to the cytoplasm. The enzyme catalyses phosphoenolpyruvate + UDP-N-acetyl-alpha-D-glucosamine = UDP-N-acetyl-3-O-(1-carboxyvinyl)-alpha-D-glucosamine + phosphate. The protein operates within cell wall biogenesis; peptidoglycan biosynthesis. Functionally, cell wall formation. Adds enolpyruvyl to UDP-N-acetylglucosamine. This is UDP-N-acetylglucosamine 1-carboxyvinyltransferase 1 from Streptococcus thermophilus (strain CNRZ 1066).